The following is a 253-amino-acid chain: Electron transfer flavoprotein subunit beta, mitochondrial (253 aa).

The protein belongs to the ETF beta-subunit/FixA family. As to quaternary structure, heterodimer of an alpha and a beta subunit. FAD serves as cofactor. It depends on AMP as a cofactor.

The protein localises to the mitochondrion matrix. In terms of biological role, the electron transfer flavoprotein serves as a specific electron acceptor for several dehydrogenases, including five acyl-CoA dehydrogenases, glutaryl-CoA and sarcosine dehydrogenase. It transfers the electrons to the main mitochondrial respiratory chain via ETF-ubiquinone oxidoreductase (ETF dehydrogenase). The chain is Electron transfer flavoprotein subunit beta, mitochondrial (ETFB) from Oryza sativa subsp. japonica (Rice).